The primary structure comprises 276 residues: MGYIDDEVKRLQGVIANLEGRVQALETKQFGPSSQKKTVEEVRAILIGPPGAGKGTQAPRLKEKFNCCHLATGDMLRSQVAKKTPLGQAAKKIMDAGGLVSDEIVIGMIKEELDNNKECKGGFILDGFPRTVPQAEGLDKMLRERNQTLQHAVELKIDDELLVARITGRLVHPASGRSYHVKFNPPKKEMTDDITGEPLIQRSDDNADALKKRLETYHKQTTPVVNYYQKTGIWKAIDASQEPGQVWKSLLAIFDGDKSKASKAGSTILSKLTHSS.

An ATP-binding site is contributed by G51–T56. An NMP region spans residues A71–V100. Residues T72, R77, G98 to V100, G127 to R130, and Q134 each bind AMP. An LID region spans residues G168–D205. ATP is bound by residues R169 and S178–Y179. 2 residues coordinate AMP: R202 and R213. Q241 is a binding site for ATP.

Belongs to the adenylate kinase family. AK2 subfamily. Monomer.

The protein localises to the cytoplasm. It is found in the cytosol. Its subcellular location is the mitochondrion intermembrane space. It catalyses the reaction AMP + ATP = 2 ADP. In terms of biological role, catalyzes the reversible transfer of the terminal phosphate group between ATP and AMP. Plays an important role in cellular energy homeostasis and in adenine nucleotide metabolism. Adenylate kinase activity is critical for regulation of the phosphate utilization and the AMP de novo biosynthesis pathways. This is Adenylate kinase from Podospora anserina (strain S / ATCC MYA-4624 / DSM 980 / FGSC 10383) (Pleurage anserina).